A 103-amino-acid polypeptide reads, in one-letter code: MATYAIVKTGGKQYKVAVGDLVKVEKIEGEPGAAVELSPVLVVDGAELTTEAEALAKRSVTAELVEQTKGPKIRIHKFKNKTGYHKRQGHRQPLTVLKVTGIK.

Belongs to the bacterial ribosomal protein bL21 family. As to quaternary structure, part of the 50S ribosomal subunit. Contacts protein L20.

In terms of biological role, this protein binds to 23S rRNA in the presence of protein L20. The chain is Large ribosomal subunit protein bL21 from Nocardia farcinica (strain IFM 10152).